Here is a 96-residue protein sequence, read N- to C-terminus: Small ribosomal subunit protein bS6 (96 aa).

It belongs to the bacterial ribosomal protein bS6 family.

In terms of biological role, binds together with bS18 to 16S ribosomal RNA. In Mycobacteroides abscessus (strain ATCC 19977 / DSM 44196 / CCUG 20993 / CIP 104536 / JCM 13569 / NCTC 13031 / TMC 1543 / L948) (Mycobacterium abscessus), this protein is Small ribosomal subunit protein bS6.